The following is a 617-amino-acid chain: tRNA 5-methylaminomethyl-2-thiouridine biosynthesis bifunctional protein MnmC (617 aa).

The segment at 1–226 is tRNA (mnm(5)s(2)U34)-methyltransferase; that stretch reads MLDWQNGQLY…KREMLQGDLP (226 aa). An FAD-dependent cmnm(5)s(2)U34 oxidoreductase region spans residues 241–617; that stretch reads IGGGIAGCAA…SPAIPVSIKG (377 aa).

In the N-terminal section; belongs to the methyltransferase superfamily. tRNA (mnm(5)s(2)U34)-methyltransferase family. The protein in the C-terminal section; belongs to the DAO family. The cofactor is FAD.

It is found in the cytoplasm. It catalyses the reaction 5-aminomethyl-2-thiouridine(34) in tRNA + S-adenosyl-L-methionine = 5-methylaminomethyl-2-thiouridine(34) in tRNA + S-adenosyl-L-homocysteine + H(+). Its function is as follows. Catalyzes the last two steps in the biosynthesis of 5-methylaminomethyl-2-thiouridine (mnm(5)s(2)U) at the wobble position (U34) in tRNA. Catalyzes the FAD-dependent demodification of cmnm(5)s(2)U34 to nm(5)s(2)U34, followed by the transfer of a methyl group from S-adenosyl-L-methionine to nm(5)s(2)U34, to form mnm(5)s(2)U34. This is tRNA 5-methylaminomethyl-2-thiouridine biosynthesis bifunctional protein MnmC from Nitrosospira multiformis (strain ATCC 25196 / NCIMB 11849 / C 71).